The primary structure comprises 195 residues: dTDP-4-dehydrorhamnose 3,5-epimerase (195 aa).

Residues arginine 31, glutamate 36, 54 to 56, and arginine 67 each bind substrate; that span reads QDN. The active-site Proton acceptor is histidine 70. Substrate is bound by residues lysine 80 and histidine 127. Catalysis depends on tyrosine 140, which acts as the Proton donor. 2 residues coordinate substrate: aspartate 151 and lysine 176.

It belongs to the dTDP-4-dehydrorhamnose 3,5-epimerase family. Homodimer.

The catalysed reaction is dTDP-4-dehydro-6-deoxy-alpha-D-glucose = dTDP-4-dehydro-beta-L-rhamnose. The protein operates within carbohydrate biosynthesis; dTDP-L-rhamnose biosynthesis. In terms of biological role, catalyzes the epimerization of the C3' and C5'positions of dTDP-6-deoxy-D-xylo-4-hexulose, forming dTDP-6-deoxy-L-lyxo-4-hexulose. This chain is dTDP-4-dehydrorhamnose 3,5-epimerase, found in Sinorhizobium fredii (strain NBRC 101917 / NGR234).